Here is a 500-residue protein sequence, read N- to C-terminus: L-arabinose isomerase (500 aa).

The Mn(2+) site is built by Glu306, Glu333, His350, and His450.

It belongs to the arabinose isomerase family. In terms of assembly, homohexamer. Mn(2+) serves as cofactor.

The enzyme catalyses beta-L-arabinopyranose = L-ribulose. Its pathway is carbohydrate degradation; L-arabinose degradation via L-ribulose; D-xylulose 5-phosphate from L-arabinose (bacterial route): step 1/3. Functionally, catalyzes the conversion of L-arabinose to L-ribulose. In Klebsiella pneumoniae subsp. pneumoniae (strain ATCC 700721 / MGH 78578), this protein is L-arabinose isomerase.